A 125-amino-acid polypeptide reads, in one-letter code: Protein ApaG (125 aa).

The ApaG domain maps to 1-125 (MINSPRVCIQ…FRLAVPTLIH (125 aa)).

This is Protein ApaG from Salmonella arizonae (strain ATCC BAA-731 / CDC346-86 / RSK2980).